We begin with the raw amino-acid sequence, 207 residues long: MHIIIAGIDTDVGKTFVSAILTVLLQAEYWKPIQSGSLNHSDSAIVHALSGARCHPESYRFSHALAAHQAAQIDNITMHQETITLPKTDASLIIETSGGFLSPCTHDSLQGDVFAQWPCHWVLVSKAYLGSINHTCLTLEAMRARNLSILGIILNQYPKEEEDWLLRTTGLPFLGRLNYEKSISKATVQNYANLWKETWKYRDTLLC.

ATP is bound at residue 11–16 (DVGKTF). Mg(2+) is bound at residue Thr-15. The active site involves Lys-31. Position 35 (Ser-35) interacts with substrate. Residues Asp-42, 95-98 (ETSG), and 155-156 (NQ) contribute to the ATP site. Positions 42 and 95 each coordinate Mg(2+).

It belongs to the dethiobiotin synthetase family. In terms of assembly, homodimer. Mg(2+) is required as a cofactor.

Its subcellular location is the cytoplasm. The enzyme catalyses (7R,8S)-7,8-diammoniononanoate + CO2 + ATP = (4R,5S)-dethiobiotin + ADP + phosphate + 3 H(+). The protein operates within cofactor biosynthesis; biotin biosynthesis; biotin from 7,8-diaminononanoate: step 1/2. Catalyzes a mechanistically unusual reaction, the ATP-dependent insertion of CO2 between the N7 and N8 nitrogen atoms of 7,8-diaminopelargonic acid (DAPA, also called 7,8-diammoniononanoate) to form a ureido ring. This Chlamydia abortus (strain DSM 27085 / S26/3) (Chlamydophila abortus) protein is ATP-dependent dethiobiotin synthetase BioD.